Reading from the N-terminus, the 185-residue chain is Ribosome-recycling factor (185 aa).

The segment at 132–152 (RRDANEQLKKMEKDSELTEDD) is disordered.

Belongs to the RRF family.

The protein localises to the cytoplasm. Its function is as follows. Responsible for the release of ribosomes from messenger RNA at the termination of protein biosynthesis. May increase the efficiency of translation by recycling ribosomes from one round of translation to another. This chain is Ribosome-recycling factor, found in Alkaliphilus metalliredigens (strain QYMF).